We begin with the raw amino-acid sequence, 328 residues long: UPF0194 membrane protein YPA_1093 (328 aa).

An N-terminal signal peptide occupies residues 1-22; the sequence is MNRKKIIVAAVIVALLATLAYG. Coiled-coil stretches lie at residues 80–109 and 141–209; these read YLNA…REEE and KAVS…ILLA.

It belongs to the UPF0194 family.

It localises to the periplasm. This Yersinia pestis bv. Antiqua (strain Antiqua) protein is UPF0194 membrane protein YPA_1093.